We begin with the raw amino-acid sequence, 271 residues long: 3-methyl-2-oxobutanoate hydroxymethyltransferase (271 aa).

2 residues coordinate Mg(2+): Asp-51 and Asp-90. 3-methyl-2-oxobutanoate-binding positions include 51–52 (DS), Asp-90, and Lys-118. Glu-120 is a Mg(2+) binding site. The active-site Proton acceptor is Glu-186.

The protein belongs to the PanB family. Homodecamer; pentamer of dimers. The cofactor is Mg(2+).

The protein localises to the cytoplasm. It catalyses the reaction 3-methyl-2-oxobutanoate + (6R)-5,10-methylene-5,6,7,8-tetrahydrofolate + H2O = 2-dehydropantoate + (6S)-5,6,7,8-tetrahydrofolate. It participates in cofactor biosynthesis; (R)-pantothenate biosynthesis; (R)-pantoate from 3-methyl-2-oxobutanoate: step 1/2. Catalyzes the reversible reaction in which hydroxymethyl group from 5,10-methylenetetrahydrofolate is transferred onto alpha-ketoisovalerate to form ketopantoate. The protein is 3-methyl-2-oxobutanoate hydroxymethyltransferase of Xanthomonas oryzae pv. oryzae (strain MAFF 311018).